A 145-amino-acid polypeptide reads, in one-letter code: Ribosomal RNA large subunit methyltransferase H (145 aa).

S-adenosyl-L-methionine is bound by residues Leu64, Gly93, and 112–117; that span reads LSPLTF.

Belongs to the RNA methyltransferase RlmH family. As to quaternary structure, homodimer.

The protein localises to the cytoplasm. The enzyme catalyses pseudouridine(1915) in 23S rRNA + S-adenosyl-L-methionine = N(3)-methylpseudouridine(1915) in 23S rRNA + S-adenosyl-L-homocysteine + H(+). Functionally, specifically methylates the pseudouridine at position 1915 (m3Psi1915) in 23S rRNA. This Prochlorococcus marinus (strain NATL1A) protein is Ribosomal RNA large subunit methyltransferase H.